Consider the following 357-residue polypeptide: Peptide chain release factor 1 (357 aa).

N5-methylglutamine is present on Gln-234.

Belongs to the prokaryotic/mitochondrial release factor family. Post-translationally, methylated by PrmC. Methylation increases the termination efficiency of RF1.

It is found in the cytoplasm. In terms of biological role, peptide chain release factor 1 directs the termination of translation in response to the peptide chain termination codons UAG and UAA. The sequence is that of Peptide chain release factor 1 from Chlorobaculum tepidum (strain ATCC 49652 / DSM 12025 / NBRC 103806 / TLS) (Chlorobium tepidum).